The following is a 468-amino-acid chain: Argininosuccinate lyase (468 aa).

2-(N(omega)-L-arginino)succinate-binding residues include S33, N121, and T166. The Proton acceptor role is filled by H167. S288 functions as the Proton donor in the catalytic mechanism. Positions 296, 328, 333, and 336 each coordinate 2-(N(omega)-L-arginino)succinate.

It belongs to the lyase 1 family. Argininosuccinate lyase subfamily. Homotetramer.

The enzyme catalyses 2-(N(omega)-L-arginino)succinate = fumarate + L-arginine. It functions in the pathway amino-acid biosynthesis; L-arginine biosynthesis; L-arginine from L-ornithine and carbamoyl phosphate: step 3/3. In Candida albicans (Yeast), this protein is Argininosuccinate lyase (ARG4).